Reading from the N-terminus, the 148-residue chain is D-aminoacyl-tRNA deacylase (148 aa).

Positions 137–138 match the Gly-cisPro motif, important for rejection of L-amino acids motif; sequence GP.

The protein belongs to the DTD family. In terms of assembly, homodimer.

Its subcellular location is the cytoplasm. The catalysed reaction is glycyl-tRNA(Ala) + H2O = tRNA(Ala) + glycine + H(+). The enzyme catalyses a D-aminoacyl-tRNA + H2O = a tRNA + a D-alpha-amino acid + H(+). Functionally, an aminoacyl-tRNA editing enzyme that deacylates mischarged D-aminoacyl-tRNAs. Also deacylates mischarged glycyl-tRNA(Ala), protecting cells against glycine mischarging by AlaRS. Acts via tRNA-based rather than protein-based catalysis; rejects L-amino acids rather than detecting D-amino acids in the active site. By recycling D-aminoacyl-tRNA to D-amino acids and free tRNA molecules, this enzyme counteracts the toxicity associated with the formation of D-aminoacyl-tRNA entities in vivo and helps enforce protein L-homochirality. The protein is D-aminoacyl-tRNA deacylase of Enterococcus faecalis (strain ATCC 700802 / V583).